The primary structure comprises 295 residues: MIHGTKVLKEGFAKMTKGGVIMDVVNAEQAAIAEDAGAVSVMALERVPSDIRKAGGVARMADPSKVIEIMDAVDIPVMAKVRIGHFVEAQVLQSLGVDMIDESEVLTQADEDFHIDKEQFTIPFVCGARDLGEALRRVDEGAAMIRTKGEAGTGNVVEAVRHMRTIQGAIREIENKTEEELWQVAREINAPRELVKLTAEKGRIPVVNFSAGGIATPADAALMMQLGADGVFVGSGIFKSENPELVAKAVVEATAHYEDADLIADVSTDLGAAMPGIDINEIPEEERLQNRGNLI.

D23 contacts D-ribose 5-phosphate. Residue K80 is the Schiff-base intermediate with D-ribose 5-phosphate of the active site. G152 is a D-ribose 5-phosphate binding site. R164 lines the D-glyceraldehyde 3-phosphate pocket. D-ribose 5-phosphate contacts are provided by residues G213 and 234-235; that span reads GS.

The protein belongs to the PdxS/SNZ family. As to quaternary structure, in the presence of PdxT, forms a dodecamer of heterodimers.

It carries out the reaction aldehydo-D-ribose 5-phosphate + D-glyceraldehyde 3-phosphate + L-glutamine = pyridoxal 5'-phosphate + L-glutamate + phosphate + 3 H2O + H(+). Its pathway is cofactor biosynthesis; pyridoxal 5'-phosphate biosynthesis. Catalyzes the formation of pyridoxal 5'-phosphate from ribose 5-phosphate (RBP), glyceraldehyde 3-phosphate (G3P) and ammonia. The ammonia is provided by the PdxT subunit. Can also use ribulose 5-phosphate and dihydroxyacetone phosphate as substrates, resulting from enzyme-catalyzed isomerization of RBP and G3P, respectively. The polypeptide is Pyridoxal 5'-phosphate synthase subunit PdxS (Methanosphaera stadtmanae (strain ATCC 43021 / DSM 3091 / JCM 11832 / MCB-3)).